The chain runs to 384 residues: Somatostatin receptor type 4 (384 aa).

Residues 1–34 (MNTPATLPLGGEDTTWTPGINASWAPDEEEDAVR) form a disordered region. Residues 1 to 41 (MNTPATLPLGGEDTTWTPGINASWAPDEEEDAVRSDGTGTA) are Extracellular-facing. Asparagine 21 carries N-linked (GlcNAc...) asparagine glycosylation. A helical transmembrane segment spans residues 42 to 69 (GMVTIQCIYALVCLVGLVGNALVIFVIL). At 70-79 (RYAKMKTATN) the chain is on the cytoplasmic side. The chain crosses the membrane as a helical span at residues 80 to 105 (IYLLNLAVADELFMLSVPFVASAAAL). Over 106-116 (RHWPFGAVLCR) the chain is Extracellular. A disulfide bridge connects residues cysteine 115 and cysteine 194. Residues 117 to 138 (AVLSVDGLNMFTSVFCLTVLSV) form a helical membrane-spanning segment. At 139–160 (DRYVAVVHPLRAATYRRPSVAK) the chain is on the cytoplasmic side. The chain crosses the membrane as a helical span at residues 161-181 (LINLGVWLASLLVTLPIAVFA). The Extracellular segment spans residues 182 to 203 (DTRPARGGEAVACNLHWPHPAW). Residues 204-228 (SAVFVIYTFLLGFLLPVLAIGLCYL) traverse the membrane as a helical segment. At 229–254 (LIVGKMRAVALRAGWQQRRRSEKKIT) the chain is on the cytoplasmic side. A helical membrane pass occupies residues 255–280 (RLVLMVVTVFVLCWMPFYVVQLLNLF). Over 281 to 287 (VTSLDAT) the chain is Extracellular. The helical transmembrane segment at 288 to 311 (VNHVSLILSYANSCANPILYGFLS) threads the bilayer. The Cytoplasmic portion of the chain corresponds to 312 to 384 (DNFRRSFQRV…RVPFTKTTTF (73 aa)). Cysteine 323 carries the S-palmitoyl cysteine lipid modification.

It belongs to the G-protein coupled receptor 1 family. Brain, lung, heart and islets. Moderate levels in the hippocampus, cortex and olfactory bulb.

Its subcellular location is the cell membrane. Functionally, receptor for somatostatin-14. The activity of this receptor is mediated by G proteins which inhibits adenylyl cyclase. It is functionally coupled not only to inhibition of adenylate cyclase, but also to activation of both arachidonate release and mitogen-activated protein (MAP) kinase cascade. This Rattus norvegicus (Rat) protein is Somatostatin receptor type 4 (Sstr4).